The chain runs to 92 residues: MTQQSNSADRKPRGKGPKRPRKPKVDPFSIGELEITDYKDVKMLRRFVSDTGKILPRRRTGLSAKHQRRIAQTIKVARQLALLPYTEKLVRK.

Residues 1–27 (MTQQSNSADRKPRGKGPKRPRKPKVDP) form a disordered region. The segment covering 12–22 (PRGKGPKRPRK) has biased composition (basic residues).

Belongs to the bacterial ribosomal protein bS18 family. As to quaternary structure, part of the 30S ribosomal subunit. Forms a tight heterodimer with protein bS6.

In terms of biological role, binds as a heterodimer with protein bS6 to the central domain of the 16S rRNA, where it helps stabilize the platform of the 30S subunit. This Deinococcus deserti (strain DSM 17065 / CIP 109153 / LMG 22923 / VCD115) protein is Small ribosomal subunit protein bS18.